We begin with the raw amino-acid sequence, 547 residues long: Ribosomal lysine N-methyltransferase set10 (547 aa).

Positions 17 to 235 (KSVEFIQSRD…KGNQLFNNYG (219 aa)) constitute an SET domain. Tyr234 provides a ligand contact to S-adenosyl-L-methionine.

The protein belongs to the class V-like SAM-binding methyltransferase superfamily. RKM1 family.

Its subcellular location is the cytoplasm. The protein resides in the nucleus. Its function is as follows. S-adenosyl-L-methionine-dependent protein-lysine N-methyltransferase that methylates ribosomal protein L23 (rpl23a and rpl23b). The protein is Ribosomal lysine N-methyltransferase set10 (set10) of Schizosaccharomyces pombe (strain 972 / ATCC 24843) (Fission yeast).